The primary structure comprises 49 residues: Large ribosomal subunit protein bL33 (49 aa).

It belongs to the bacterial ribosomal protein bL33 family.

This Syntrophobacter fumaroxidans (strain DSM 10017 / MPOB) protein is Large ribosomal subunit protein bL33.